Here is a 547-residue protein sequence, read N- to C-terminus: Genetic interactor of prohibitins 3, mitochondrial (547 aa).

A mitochondrion-targeting transit peptide spans 1 to 22 (MLRRSLSVVFGRRTIACKSCGI). Residues 105 to 290 (EHTLEDVGKG…IHDVPGYRTS (186 aa)) form the CP-type G domain.

It belongs to the TRAFAC class YlqF/YawG GTPase family. GEP3 subfamily.

Its subcellular location is the mitochondrion. Functionally, may be involved in the mitochondrial lipid metabolism. This Eremothecium gossypii (strain ATCC 10895 / CBS 109.51 / FGSC 9923 / NRRL Y-1056) (Yeast) protein is Genetic interactor of prohibitins 3, mitochondrial (GEP3).